Reading from the N-terminus, the 564-residue chain is DNA ligase (564 aa).

ATP is bound at residue E234. K236 serves as the catalytic N6-AMP-lysine intermediate. R241, R256, E288, and F323 together coordinate ATP. E288 lines the a divalent metal cation pocket. A divalent metal cation is bound at residue E383. Residues R399 and K403 each coordinate ATP.

Belongs to the ATP-dependent DNA ligase family. The cofactor is a divalent metal cation.

It catalyses the reaction ATP + (deoxyribonucleotide)n-3'-hydroxyl + 5'-phospho-(deoxyribonucleotide)m = (deoxyribonucleotide)n+m + AMP + diphosphate.. Functionally, DNA ligase that seals nicks in double-stranded DNA during DNA replication, DNA recombination and DNA repair. It is not essential for viral replication and recombination. In Vertebrata (FPV), this protein is DNA ligase (LIG).